The following is a 139-amino-acid chain: Putative pre-16S rRNA nuclease (139 aa).

This sequence belongs to the YqgF nuclease family.

The protein localises to the cytoplasm. In terms of biological role, could be a nuclease involved in processing of the 5'-end of pre-16S rRNA. This chain is Putative pre-16S rRNA nuclease, found in Streptococcus equi subsp. equi (strain 4047).